We begin with the raw amino-acid sequence, 353 residues long: Photosystem II protein D1 (353 aa).

Thr-2 is subject to N-acetylthreonine. The residue at position 2 (Thr-2) is a Phosphothreonine. The next 3 membrane-spanning stretches (helical) occupy residues 29–46 (YIGW…TATS), 118–133 (HFLL…EWEL), and 142–156 (WIAV…AATA). His-118 contributes to the chlorophyll a binding site. Tyr-126 contacts pheophytin a. [CaMn4O5] cluster is bound by residues Asp-170 and Glu-189. Residues 197-218 (FHMLGVAGVFGGSLFSAMHGSL) traverse the membrane as a helical segment. A chlorophyll a-binding site is contributed by His-198. A quinone contacts are provided by residues His-215 and 264-265 (SF). His-215 is a binding site for Fe cation. Residue His-272 coordinates Fe cation. The helical transmembrane segment at 274 to 288 (FLAAWPVVGIWFTAL) threads the bilayer. Positions 332, 333, 342, and 344 each coordinate [CaMn4O5] cluster. A propeptide spanning residues 345 to 353 (AVEVPSTNG) is cleaved from the precursor.

Belongs to the reaction center PufL/M/PsbA/D family. In terms of assembly, PSII is composed of 1 copy each of membrane proteins PsbA, PsbB, PsbC, PsbD, PsbE, PsbF, PsbH, PsbI, PsbJ, PsbK, PsbL, PsbM, PsbT, PsbX, PsbY, PsbZ, Psb30/Ycf12, at least 3 peripheral proteins of the oxygen-evolving complex and a large number of cofactors. It forms dimeric complexes. The D1/D2 heterodimer binds P680, chlorophylls that are the primary electron donor of PSII, and subsequent electron acceptors. It shares a non-heme iron and each subunit binds pheophytin, quinone, additional chlorophylls, carotenoids and lipids. D1 provides most of the ligands for the Mn4-Ca-O5 cluster of the oxygen-evolving complex (OEC). There is also a Cl(-1) ion associated with D1 and D2, which is required for oxygen evolution. The PSII complex binds additional chlorophylls, carotenoids and specific lipids. is required as a cofactor. Post-translationally, tyr-161 forms a radical intermediate that is referred to as redox-active TyrZ, YZ or Y-Z. In terms of processing, C-terminally processed by CTPA; processing is essential to allow assembly of the oxygen-evolving complex and thus photosynthetic growth.

The protein localises to the plastid. Its subcellular location is the chloroplast thylakoid membrane. The enzyme catalyses 2 a plastoquinone + 4 hnu + 2 H2O = 2 a plastoquinol + O2. Functionally, photosystem II (PSII) is a light-driven water:plastoquinone oxidoreductase that uses light energy to abstract electrons from H(2)O, generating O(2) and a proton gradient subsequently used for ATP formation. It consists of a core antenna complex that captures photons, and an electron transfer chain that converts photonic excitation into a charge separation. The D1/D2 (PsbA/PsbD) reaction center heterodimer binds P680, the primary electron donor of PSII as well as several subsequent electron acceptors. The polypeptide is Photosystem II protein D1 (Eucalyptus globulus subsp. globulus (Tasmanian blue gum)).